Consider the following 129-residue polypeptide: Small ribosomal subunit protein uS11 (129 aa).

Residues Thr-108 to Lys-129 are disordered. The segment covering Pro-117–Lys-129 has biased composition (basic residues).

The protein belongs to the universal ribosomal protein uS11 family. In terms of assembly, part of the 30S ribosomal subunit. Interacts with proteins S7 and S18. Binds to IF-3.

Located on the platform of the 30S subunit, it bridges several disparate RNA helices of the 16S rRNA. Forms part of the Shine-Dalgarno cleft in the 70S ribosome. This Mycoplasmopsis synoviae (strain 53) (Mycoplasma synoviae) protein is Small ribosomal subunit protein uS11.